The sequence spans 382 residues: MSSSCIEEVSVPDDNWYRIANELLSRAGIAINGSAPADIRVKNPDFFKRVLQEGSLGLGESYMDGWWECDRLDMFFSKVLRAGLENQLPHHFKDTLRIAGARLFNLQSKKRAWIVGKEHYDLGNDLFSRMLDPFMQYSCAYWKDADNLESAQQAKLKMICEKLQLKPGMRVLDIGCGWGGLAHYMASNYDVSVVGVTISAEQQKMAQERCEGLDVTILLQDYRDLNDQFDRIVSVGMFEHVGPKNYDTYFAVVDRNLKPEGIFLLHTIGSKKTDLNVDPWINKYIFPNGCLPSVRQIAQSSEPHFVMEDWHNFGADYDTTLMAWYERFLAAWPEIADNYSERFKRMFTYYLNACAGAFRARDIQLWQVVFSRGVENGLRVAR.

S-adenosyl-L-methionine contacts are provided by residues 137–138 (YS), 171–179 (VLDIGCGWG), and 197–202 (TISAEQ). Residue Cys354 is part of the active site.

The protein belongs to the CFA/CMAS family.

It is found in the cytoplasm. The catalysed reaction is a 1-acyl-2-(9Z)-enoyl-sn-glycero-3-phospholipid + S-adenosyl-L-methionine = a 1-acyl-2-(9-cyclopronane)-acyl-sn-glycero-3-phospholipid + S-adenosyl-L-homocysteine + H(+). It participates in lipid metabolism; fatty acid biosynthesis. In terms of biological role, transfers a methylene group from S-adenosyl-L-methionine to the cis double bond of an unsaturated fatty acid chain resulting in the replacement of the double bond with a methylene bridge. This Escherichia coli O6:H1 (strain CFT073 / ATCC 700928 / UPEC) protein is Cyclopropane-fatty-acyl-phospholipid synthase (cfa).